The sequence spans 512 residues: Cytochrome P450 76C1 (512 aa).

Residues 3-23 traverse the membrane as a helical segment; sequence IISGQALLLLFCFILSCFLIF. Cysteine 450 serves as a coordination point for heme.

This sequence belongs to the cytochrome P450 family. Requires heme as cofactor.

The protein localises to the membrane. The sequence is that of Cytochrome P450 76C1 (CYP76C1) from Arabidopsis thaliana (Mouse-ear cress).